The following is a 189-amino-acid chain: Phosphoheptose isomerase (189 aa).

Residues 34-189 (LVDALGNGKK…CDLLEKRLFG (156 aa)) enclose the SIS domain. Residue 49 to 51 (NGG) coordinates substrate. Residues histidine 58 and glutamate 62 each coordinate Zn(2+). Residues glutamate 62, 91 to 92 (ND), 117 to 119 (STS), serine 122, and glutamine 169 contribute to the substrate site. 2 residues coordinate Zn(2+): glutamine 169 and histidine 177.

It belongs to the SIS family. GmhA subfamily. In terms of assembly, homotetramer. It depends on Zn(2+) as a cofactor.

The protein resides in the cytoplasm. The enzyme catalyses 2 D-sedoheptulose 7-phosphate = D-glycero-alpha-D-manno-heptose 7-phosphate + D-glycero-beta-D-manno-heptose 7-phosphate. The protein operates within carbohydrate biosynthesis; D-glycero-D-manno-heptose 7-phosphate biosynthesis; D-glycero-alpha-D-manno-heptose 7-phosphate and D-glycero-beta-D-manno-heptose 7-phosphate from sedoheptulose 7-phosphate: step 1/1. Its function is as follows. Catalyzes the isomerization of sedoheptulose 7-phosphate in D-glycero-D-manno-heptose 7-phosphate. This is Phosphoheptose isomerase from Geotalea uraniireducens (strain Rf4) (Geobacter uraniireducens).